A 115-amino-acid polypeptide reads, in one-letter code: UPF0102 protein NMA0341 (115 aa).

It belongs to the UPF0102 family.

The protein is UPF0102 protein NMA0341 of Neisseria meningitidis serogroup A / serotype 4A (strain DSM 15465 / Z2491).